The following is a 398-amino-acid chain: Dual specificity protein phosphatase 4 (398 aa).

Val-2 is subject to N-acetylvaline. Positions 45 to 163 constitute a Rhodanese domain; sequence SGGKCLLLDC…FSSEYPEFCS (119 aa). A Tyrosine-protein phosphatase domain is found at 199–340; that stretch reads GPVEILPFLY…LLQFESQVLT (142 aa). Cys-284 acts as the Phosphocysteine intermediate in catalysis. Phosphoserine; by MAPK occurs at positions 390 and 395.

Belongs to the protein-tyrosine phosphatase family. Non-receptor class dual specificity subfamily. In terms of assembly, hollow spherical complex composed of 24 subunits with pseudooctahedral symmetry, has a tetramer as the basic unit. Post-translationally, phosphorylation in the C-terminus by ERK1/2 inhibits proteasomal degradation and stabilizes the protein.

Its subcellular location is the nucleus. It carries out the reaction O-phospho-L-tyrosyl-[protein] + H2O = L-tyrosyl-[protein] + phosphate. The catalysed reaction is O-phospho-L-seryl-[protein] + H2O = L-seryl-[protein] + phosphate. It catalyses the reaction O-phospho-L-threonyl-[protein] + H2O = L-threonyl-[protein] + phosphate. Functionally, regulates mitogenic signal transduction by dephosphorylating both Thr and Tyr residues on MAP kinases ERK1 and ERK2. The chain is Dual specificity protein phosphatase 4 (Dusp4) from Mus musculus (Mouse).